A 326-amino-acid polypeptide reads, in one-letter code: Probable cell division protein WhiA (326 aa).

Residues 275-308 (SLEELGQLADPPLTKDAIAGRIRRLLAMADKRAA) constitute a DNA-binding region (H-T-H motif).

The protein belongs to the WhiA family.

Functionally, involved in cell division and chromosome segregation. This Thermobifida fusca (strain YX) protein is Probable cell division protein WhiA.